Here is a 477-residue protein sequence, read N- to C-terminus: UDP-N-acetylmuramate--L-alanine ligase (477 aa).

112-118 contacts ATP; that stretch reads GTHGKTT.

The protein belongs to the MurCDEF family.

It localises to the cytoplasm. It catalyses the reaction UDP-N-acetyl-alpha-D-muramate + L-alanine + ATP = UDP-N-acetyl-alpha-D-muramoyl-L-alanine + ADP + phosphate + H(+). Its pathway is cell wall biogenesis; peptidoglycan biosynthesis. In terms of biological role, cell wall formation. The chain is UDP-N-acetylmuramate--L-alanine ligase from Cupriavidus necator (strain ATCC 17699 / DSM 428 / KCTC 22496 / NCIMB 10442 / H16 / Stanier 337) (Ralstonia eutropha).